The primary structure comprises 333 residues: Acetyl-coenzyme A carboxylase carboxyl transferase subunit alpha (333 aa).

Positions 48 to 308 (ALEVKVETLR…KEMLIEELRI (261 aa)) constitute a CoA carboxyltransferase C-terminal domain.

This sequence belongs to the AccA family. As to quaternary structure, acetyl-CoA carboxylase is a heterohexamer composed of biotin carboxyl carrier protein (AccB), biotin carboxylase (AccC) and two subunits each of ACCase subunit alpha (AccA) and ACCase subunit beta (AccD).

The protein localises to the cytoplasm. It catalyses the reaction N(6)-carboxybiotinyl-L-lysyl-[protein] + acetyl-CoA = N(6)-biotinyl-L-lysyl-[protein] + malonyl-CoA. It functions in the pathway lipid metabolism; malonyl-CoA biosynthesis; malonyl-CoA from acetyl-CoA: step 1/1. Its function is as follows. Component of the acetyl coenzyme A carboxylase (ACC) complex. First, biotin carboxylase catalyzes the carboxylation of biotin on its carrier protein (BCCP) and then the CO(2) group is transferred by the carboxyltransferase to acetyl-CoA to form malonyl-CoA. This Chlorobium phaeobacteroides (strain DSM 266 / SMG 266 / 2430) protein is Acetyl-coenzyme A carboxylase carboxyl transferase subunit alpha.